Reading from the N-terminus, the 373-residue chain is P2Y purinoceptor 1 (373 aa).

At Met1–Phe51 the chain is on the extracellular side. N-linked (GlcNAc...) asparagine glycosylation is found at Asn11 and Asn27. Cystine bridges form between Cys42-Cys296 and Cys124-Cys202. Lys46 contacts ADP. Residues Tyr52–Trp74 traverse the membrane as a helical segment. At Met75 to Ser87 the chain is on the cytoplasmic side. Residues Val88–Phe109 form a helical membrane-spanning segment. The Extracellular portion of the chain corresponds to Tyr110 to Lys125. Asn113 is a glycosylation site (N-linked (GlcNAc...) asparagine). A helical transmembrane segment spans residues Leu126–Ala147. Residues His148 to Lys166 are Cytoplasmic-facing. The helical transmembrane segment at Asn167–Phe188 threads the bilayer. Over Tyr189–Tyr214 the chain is Extracellular. An N-linked (GlcNAc...) asparagine glycan is attached at Asn197. Tyr203–Thr205 lines the ADP pocket. Residues Phe215–Tyr237 traverse the membrane as a helical segment. Residues Gly238–Tyr260 lie on the Cytoplasmic side of the membrane. The chain crosses the membrane as a helical span at residues Leu261–Leu284. ADP is bound by residues Asn283–Arg287, Tyr303–Tyr306, and Arg310. The Extracellular segment spans residues Arg285–Tyr303. A helical transmembrane segment spans residues Ala304–Phe325. Over Leu326 to Leu373 the chain is Cytoplasmic.

It belongs to the G-protein coupled receptor 1 family.

The protein localises to the cell membrane. Receptor for extracellular adenine nucleotides such as ADP. In platelets, binding to ADP leads to mobilization of intracellular calcium ions via activation of phospholipase C, a change in platelet shape, and ultimately platelet aggregation. This is P2Y purinoceptor 1 (P2RY1) from Bos taurus (Bovine).